The chain runs to 159 residues: Protein-export protein SecB (159 aa).

It belongs to the SecB family. In terms of assembly, homotetramer, a dimer of dimers. One homotetramer interacts with 1 SecA dimer.

It localises to the cytoplasm. One of the proteins required for the normal export of preproteins out of the cell cytoplasm. It is a molecular chaperone that binds to a subset of precursor proteins, maintaining them in a translocation-competent state. It also specifically binds to its receptor SecA. The sequence is that of Protein-export protein SecB from Pseudomonas fluorescens (strain SBW25).